Consider the following 245-residue polypeptide: Ribonuclease 3 (245 aa).

The RNase III domain occupies 19 to 144 (ASILEERTGH…LIATIYLDGG (126 aa)). Residue Glu57 coordinates Mg(2+). Asp61 is a catalytic residue. Asp130 and Glu133 together coordinate Mg(2+). Residue Glu133 is part of the active site. The 70-residue stretch at 169 to 238 (DAKTELQEWA…AEAMLYREGV (70 aa)) folds into the DRBM domain.

It belongs to the ribonuclease III family. Homodimer. Requires Mg(2+) as cofactor.

The protein resides in the cytoplasm. It catalyses the reaction Endonucleolytic cleavage to 5'-phosphomonoester.. In terms of biological role, digests double-stranded RNA. Involved in the processing of primary rRNA transcript to yield the immediate precursors to the large and small rRNAs (23S and 16S). Processes some mRNAs, and tRNAs when they are encoded in the rRNA operon. Processes pre-crRNA and tracrRNA of type II CRISPR loci if present in the organism. This Brucella abortus (strain S19) protein is Ribonuclease 3.